Reading from the N-terminus, the 43-residue chain is Protein PsbN (43 aa).

The helical transmembrane segment at 7–27 threads the bilayer; that stretch reads IAIFISCLIVSFTGYALYTAF.

The protein belongs to the PsbN family.

The protein resides in the plastid. Its subcellular location is the chloroplast thylakoid membrane. May play a role in photosystem I and II biogenesis. The protein is Protein PsbN of Psilotum nudum (Whisk fern).